The sequence spans 175 residues: Photosynthetic NDH subunit of subcomplex B 4, chloroplastic (175 aa).

The N-terminal 24 residues, 1 to 24, are a transit peptide targeting the chloroplast; that stretch reads MAEAFTSFTFTNLHIPSSYNHSPK. A helical transmembrane segment spans residues 95–111; sequence VYMFYIMFTCWGCLYFG.

As to quaternary structure, part of the chloroplast NDH complex, composed of a mixture of chloroplast and nucleus encoded subunits. Component of the NDH subcomplex B, at least composed of PnsB1, PnsB2, PnsB3, PnsB4 and PnsB5.

The protein resides in the plastid. It is found in the chloroplast thylakoid membrane. Functionally, NDH shuttles electrons from NAD(P)H:plastoquinone, via FMN and iron-sulfur (Fe-S) centers, to quinones in the photosynthetic chain and possibly in a chloroplast respiratory chain. The immediate electron acceptor for the enzyme in this species is believed to be plastoquinone. Couples the redox reaction to proton translocation, and thus conserves the redox energy in a proton gradient. In Arabidopsis thaliana (Mouse-ear cress), this protein is Photosynthetic NDH subunit of subcomplex B 4, chloroplastic.